The primary structure comprises 185 residues: Pycsar effector protein EcPycTM (185 aa).

The next 3 membrane-spanning stretches (helical) occupy residues 32-52 (ALLL…VGYF), 63-83 (MVIF…SVLL), and 141-161 (FILS…VSWI).

It is found in the cell inner membrane. In terms of biological role, pycsar (pyrimidine cyclase system for antiphage resistance) provides immunity against bacteriophage. The pyrimidine cyclase (PycC) synthesizes cyclic nucleotides in response to infection; these serve as specific second messenger signals. The signals activate the adjacent effector, leading to bacterial cell death and abortive phage infection. A clade E Pycsar system. Functionally, the effector component of a two-gene Pycsar system. Expression of this and adjacent cytidylate cyclase EcPycC (AC P0DV24) confers resistance to bacteriophage P1 and T5; this protein is required for resistance. When cells expressing the Pycsar system are infected by phage T5 at low multiplicity of infection (0.2 MOI) the culture survives, at 2.0 MOI bacteria enter growth arrest. The same cells enter growth arrest after exposure to 250 uM cCMP but not cUMP; this effector protein responds only to cCMP, usually produced by its cognate NTP cyclase. Some of the cells treated with cCMP have abnormal membrane protrusions, probably due to effects on membrane integrity. The protein is Pycsar effector protein EcPycTM of Escherichia coli.